The sequence spans 140 residues: L-fucose mutarotase (140 aa).

H22 acts as the Proton donor in catalysis. Substrate contacts are provided by residues D30, R107, and 129–131; that span reads YGN.

This sequence belongs to the RbsD / FucU family. FucU mutarotase subfamily. In terms of assembly, homodecamer.

The protein localises to the cytoplasm. The catalysed reaction is alpha-L-fucose = beta-L-fucose. It functions in the pathway carbohydrate metabolism; L-fucose metabolism. In terms of biological role, involved in the anomeric conversion of L-fucose. The sequence is that of L-fucose mutarotase from Salmonella paratyphi B (strain ATCC BAA-1250 / SPB7).